The following is a 325-amino-acid chain: MSPTESPGTTTLRHRTVLLDEAVDALVWRPDGAYVDGTFGRGGHSRAVLARLGPAGTLVAFDKDPAAIAEAGTIKDARFSIEHASFAEMGDRLAGRGPVAGVLLDLGISSPQIDEAARGFSFRFEGPLDMRMDTTRGITAAEWLAQADEQDIARVIRDYGEERFALQIAKAIVARRRESGDGGALATTSDLAALVAKAVKTREKGQDPATRTFQALRIYINQELEDLERGLKAAYELLQVGGRLVVISFHSLEDRIVKRFMQAHARPERDADPALRRAPLRAADLPQPTMKLLGRFKPGAEEVAGNPRARSAVMRVAEKLGEQSA.

S-adenosyl-L-methionine-binding positions include 42-44, D62, F86, D105, and Q112; that span reads GGH.

Belongs to the methyltransferase superfamily. RsmH family.

The protein localises to the cytoplasm. It carries out the reaction cytidine(1402) in 16S rRNA + S-adenosyl-L-methionine = N(4)-methylcytidine(1402) in 16S rRNA + S-adenosyl-L-homocysteine + H(+). Its function is as follows. Specifically methylates the N4 position of cytidine in position 1402 (C1402) of 16S rRNA. This Cupriavidus metallidurans (strain ATCC 43123 / DSM 2839 / NBRC 102507 / CH34) (Ralstonia metallidurans) protein is Ribosomal RNA small subunit methyltransferase H.